A 752-amino-acid polypeptide reads, in one-letter code: Maltodextrin phosphorylase (752 aa).

Lysine 603 carries the N6-(pyridoxal phosphate)lysine modification.

Belongs to the glycogen phosphorylase family. Requires pyridoxal 5'-phosphate as cofactor.

The catalysed reaction is [(1-&gt;4)-alpha-D-glucosyl](n) + phosphate = [(1-&gt;4)-alpha-D-glucosyl](n-1) + alpha-D-glucose 1-phosphate. Its function is as follows. Phosphorylase is an important allosteric enzyme in carbohydrate metabolism. Enzymes from different sources differ in their regulatory mechanisms and in their natural substrates. However, all known phosphorylases share catalytic and structural properties. This chain is Maltodextrin phosphorylase (malP), found in Streptococcus pneumoniae serotype 4 (strain ATCC BAA-334 / TIGR4).